The sequence spans 93 residues: 3-isopropylmalate dehydratase small subunit (93 aa).

This sequence belongs to the LeuD family. LeuD type 1 subfamily. Heterodimer of LeuC and LeuD.

It carries out the reaction (2R,3S)-3-isopropylmalate = (2S)-2-isopropylmalate. It participates in amino-acid biosynthesis; L-leucine biosynthesis; L-leucine from 3-methyl-2-oxobutanoate: step 2/4. Catalyzes the isomerization between 2-isopropylmalate and 3-isopropylmalate, via the formation of 2-isopropylmaleate. The sequence is that of 3-isopropylmalate dehydratase small subunit (leuD) from Actinoplanes teichomyceticus.